The sequence spans 551 residues: DEAD-box ATP-dependent RNA helicase 47, mitochondrial (551 aa).

A mitochondrion-targeting transit peptide spans 1–29; the sequence is MAASTSTRFLVLLKDFSAFRKISWTCAAT. The short motif at 110 to 138 is the Q motif element; sequence KSFEELGLPDSLLDSLEREGFSVPTDVQS. Residues 141-340 form the Helicase ATP-binding domain; the sequence is VPAIIKGHDA…KSWSHEPVLV (200 aa). Residue 154–161 participates in ATP binding; that stretch reads SYTGSGKT. The short motif at 274–277 is the DEAD box element; sequence DEVD. The 152-residue stretch at 397-548 folds into the Helicase C-terminal domain; sequence TLRRCVHALD…ELVVTEEDKA (152 aa).

The protein belongs to the DEAD box helicase family. As to expression, mostly expressed in leaves and flowers, and, to a lower extent, in roots, seedlings and siliques, especially in meristematic regions.

The protein resides in the mitochondrion. It carries out the reaction ATP + H2O = ADP + phosphate + H(+). In terms of biological role, essential protein required during embryogenesis. Required for mitochondrial metabolism. Necessary for normal plasmodesmata (PD) development and aperture regulation. The protein is DEAD-box ATP-dependent RNA helicase 47, mitochondrial (RH47) of Arabidopsis thaliana (Mouse-ear cress).